Consider the following 884-residue polypeptide: Cytosolic carboxypeptidase-like protein 5 (884 aa).

The Peptidase M14 domain maps to 157 to 570 (YPFSYSDCQD…AMAIAALDMA (414 aa)). Zn(2+)-binding residues include H252 and E255. Disordered stretches follow at residues 343-364 (HPQSPSEHQHSPCLPPDAPLSD) and 376-401 (HLGHTSDGDSPEDWTQTRPAEQKASG). Zn(2+) is bound at residue H434. E516 (proton donor/acceptor) is an active-site residue. Disordered stretches follow at residues 603-737 (LSST…HSTG) and 784-859 (QVRP…RICY). Positions 620–635 (PPRSNSGLPVSCSENP) are enriched in polar residues. 2 stretches are compositionally biased toward low complexity: residues 641-666 (SFSTGTSAGGSSSSQQNSPQMKNSPS) and 714-737 (PTSSSLAPSPNPTSSSPASSHSTG). S839 bears the Phosphoserine mark. The span at 846 to 857 (ISCSLSDSQSRI) shows a compositional bias: polar residues.

Belongs to the peptidase M14 family. Zn(2+) is required as a cofactor.

It is found in the cytoplasm. Its subcellular location is the cytosol. The protein resides in the nucleus. The protein localises to the cytoskeleton. It localises to the spindle. It is found in the midbody. The enzyme catalyses gamma-L-glutamyl-L-glutamyl-[protein] + H2O = L-glutamyl-[protein] + L-glutamate. It carries out the reaction (L-glutamyl)(n+1)-gamma-L-glutamyl-L-glutamyl-[protein] + H2O = (L-glutamyl)(n)-gamma-L-glutamyl-L-glutamyl-[protein] + L-glutamate. The catalysed reaction is C-terminal L-alpha-aminoacyl-L-glutamyl-[tubulin] + H2O = C-terminal L-alpha-aminoacyl-[tubulin] + L-glutamate. It catalyses the reaction C-terminal L-alpha-aminoacyl-L-glutamyl-L-glutamyl-[tubulin] + H2O = C-terminal L-alpha-aminoacyl-L-glutamyl-[tubulin] + L-glutamate. Metallocarboxypeptidase that mediates deglutamylation of tubulin and non-tubulin target proteins. Catalyzes the removal of polyglutamate side chains present on the gamma-carboxyl group of glutamate residues within the C-terminal tail of alpha- and beta-tubulin. Cleaves alpha- and gamma-linked polyglutamate tubulin side-chain, as well as the branching point glutamate. Also catalyzes the removal of alpha-linked glutamate residues from the carboxy-terminus of alpha-tubulin. Mediates deglutamylation of nucleotidyltransferase CGAS, leading to CGAS antiviral defense response activation. This chain is Cytosolic carboxypeptidase-like protein 5 (AGBL5), found in Ailuropoda melanoleuca (Giant panda).